A 240-amino-acid polypeptide reads, in one-letter code: MPFDPAASPLSPSQARVLATLMEKARTVPDSYPMSLNGLLTGCNQKTSRDPVMALSEAQVQEALAALERLALVFENSGYRSPRWEHNFQRGAGVPEQSAVLLGLLMLRGPQTAAELRTNAERWYRFADISSVEAFLDELQQRSADKGGPLAVPLPRSPGTREQRWAHLLCGPVDAGRSNAGVEPVPAGVETLQERIGTLESELASLRATVQWLCQELGITPAPASMPQPGLPAGNGSPGS.

The protein belongs to the UPF0502 family.

The sequence is that of UPF0502 protein Veis_2102 from Verminephrobacter eiseniae (strain EF01-2).